The chain runs to 121 residues: uncharacterized protein (121 aa).

To E.coli YcjD and H.influenzae HI_1162.

This is an uncharacterized protein from Haemophilus influenzae (strain ATCC 51907 / DSM 11121 / KW20 / Rd).